The sequence spans 230 residues: 2,3-bisphosphoglycerate-dependent phosphoglycerate mutase (230 aa).

Substrate contacts are provided by residues 8-15, 21-22, R60, 87-90, K98, 114-115, and 183-184; these read RHGESEWN, TG, ERHY, RR, and GN. The Tele-phosphohistidine intermediate role is filled by H9. The active-site Proton donor/acceptor is E87.

This sequence belongs to the phosphoglycerate mutase family. BPG-dependent PGAM subfamily.

The catalysed reaction is (2R)-2-phosphoglycerate = (2R)-3-phosphoglycerate. The protein operates within carbohydrate degradation; glycolysis; pyruvate from D-glyceraldehyde 3-phosphate: step 3/5. In terms of biological role, catalyzes the interconversion of 2-phosphoglycerate and 3-phosphoglycerate. This is 2,3-bisphosphoglycerate-dependent phosphoglycerate mutase from Streptococcus uberis (strain ATCC BAA-854 / 0140J).